The sequence spans 243 residues: Uridylate kinase (243 aa).

18-21 provides a ligand contact to ATP; it reads KLGG. Gly-59 contributes to the UMP binding site. Positions 60 and 64 each coordinate ATP. UMP-binding positions include Asp-79 and 140–147; that span reads MGMPYFST. ATP is bound by residues Tyr-173 and Asp-176.

Belongs to the UMP kinase family. In terms of assembly, homohexamer.

Its subcellular location is the cytoplasm. It carries out the reaction UMP + ATP = UDP + ADP. It participates in pyrimidine metabolism; CTP biosynthesis via de novo pathway; UDP from UMP (UMPK route): step 1/1. Its activity is regulated as follows. Inhibited by UTP. Its function is as follows. Catalyzes the reversible phosphorylation of UMP to UDP. This chain is Uridylate kinase, found in Corynebacterium glutamicum (strain R).